Here is a 377-residue protein sequence, read N- to C-terminus: Apelin receptor (377 aa).

Over 1–28 (MEDDGYNYYGADNQSECDYADWKPSGAL) the chain is Extracellular. Asparagine 13 is a glycosylation site (N-linked (GlcNAc...) asparagine). Disulfide bonds link cysteine 17–cysteine 279 and cysteine 100–cysteine 179. The helical transmembrane segment at 29–52 (IPAIYMLVFLLGTTGNGLVLWTVF) threads the bilayer. At 53–62 (RTSREKRRSA) the chain is on the cytoplasmic side. Residues 63–84 (DIFIASLAVADLTFVVTLPLWA) form a helical membrane-spanning segment. Over 85 to 97 (TYTYREFDWPFGT) the chain is Extracellular. Residues 98 to 123 (FSCKLSSYLIFVNMYASVFCLTGLSF) form a helical membrane-spanning segment. Residues 124–144 (DRYLAIVRPVANARLRLRVSG) are Cytoplasmic-facing. A helical membrane pass occupies residues 145–162 (AVATAVLWVLAALLAVPV). Topologically, residues 163 to 196 (MVFRSTDASENGTKIQCYMDYSMVATSNSEWAWE) are extracellular. Asparagine 173 carries N-linked (GlcNAc...) asparagine glycosylation. A helical transmembrane segment spans residues 197–221 (VGLGVSSTAVGFVVPFTIMLTCYFF). The Cytoplasmic portion of the chain corresponds to 222 to 244 (IAQTIAGHFRKERIEGLRKRRRL). A helical transmembrane segment spans residues 245 to 268 (LSIIVVLVVTFALCWMPYHLVKTL). Residues 269 to 287 (YMLGSLLHWPCDFDIFLMN) lie on the Extracellular side of the membrane. The chain crosses the membrane as a helical span at residues 288-310 (VFPYCTCISYVNSCLNPFLYAFF). The Cytoplasmic segment spans residues 311-377 (DPRFRQACTS…IPYSQETLVD (67 aa)). Residues 334–377 (HSSSAEKSASYSSGHSQGPGPNMGKGGEQMHEKSIPYSQETLVD) are disordered. The span at 335–349 (SSSAEKSASYSSGHS) shows a compositional bias: low complexity.

Belongs to the G-protein coupled receptor 1 family. As to quaternary structure, homodimer; dimerization inhibits APLNR-mediated G protein and beta-arrestin signaling pathways compared to monomeric APLNR. Expressed in coronary endothelial cells (at protein level). Expressed in the embryo, allantoic and endothelial precursor cells of the yolk sac at 8 days post-coitum (dpc). Expressed in the secondary heart field and somite at 8.25 dpc. Expressed in fetal allantoic endothelial cells at 9 dpc. Expressed in the allantoid and the invading fetal vasculature of the placenta at 9.5 dpc. Expressed in endothelial cells adjacent to syncytiotrophoblast cells at 10.5 dpc. Expressed weakly in the embryonic heart at 11.5 dpc. Expressed in the adult heart. Expressed in endothelial cells and cardiomyocytes and weakly expressed in fibroblasts.

It is found in the cell membrane. Functionally, g protein-coupled receptor for peptide hormones apelin (APLN) and apelin receptor early endogenous ligand (APELA), that plays a role in the regulation of normal cardiovascular function and fluid homeostasis. When acting as apelin receptor, activates both G(i) protein pathway that inhibits adenylate cyclase activity, and the beta-arrestin pathway leading to internalization of the receptor. APLNR/APJ receptor is also activated by mechanical strech in a G-protein-independent fashion to induce beta-arrestin signaling leading to cardiac hypertrophy. However, the presence of apelin ligand blunts cardiac hypertrophic induction from APLNR/APJ on response to pathological stimuli. Plays a key role in early development such as gastrulation, blood vessels formation and heart morphogenesis by acting as a receptor for APELA hormone. May promote angioblast migration toward the embryonic midline, i.e. the position of the future vessel formation, during vasculogenesis. Promotes sinus venosus (SV)-derived endothelial cells migration into the developing heart to promote coronary blood vessel development. Also plays a role in various processes in adults such as regulation of blood vessel formation, blood pressure and heart contractility and protection from cardiac hypertrophy and heart failure. The protein is Apelin receptor of Mus musculus (Mouse).